We begin with the raw amino-acid sequence, 196 residues long: Phosphoheptose isomerase (196 aa).

The region spanning 31 to 196 is the SIS domain; the sequence is VARQFKAGNK…KAGLEAQIAV (166 aa). 46–48 is a substrate binding site; it reads NGG. Residues His-55 and Glu-59 each contribute to the Zn(2+) site. Substrate is bound by residues Glu-59, 88–89, 114–116, Ser-119, and Gln-166; these read ND and STS. Residues Gln-166 and His-174 each coordinate Zn(2+).

Belongs to the SIS family. GmhA subfamily. Requires Zn(2+) as cofactor.

Its subcellular location is the cytoplasm. It carries out the reaction 2 D-sedoheptulose 7-phosphate = D-glycero-alpha-D-manno-heptose 7-phosphate + D-glycero-beta-D-manno-heptose 7-phosphate. It participates in carbohydrate biosynthesis; D-glycero-D-manno-heptose 7-phosphate biosynthesis; D-glycero-alpha-D-manno-heptose 7-phosphate and D-glycero-beta-D-manno-heptose 7-phosphate from sedoheptulose 7-phosphate: step 1/1. In terms of biological role, catalyzes the isomerization of sedoheptulose 7-phosphate in D-glycero-D-manno-heptose 7-phosphate. The sequence is that of Phosphoheptose isomerase from Crocosphaera subtropica (strain ATCC 51142 / BH68) (Cyanothece sp. (strain ATCC 51142)).